The following is a 352-amino-acid chain: Probable RNA methyltransferase CV_2253 (352 aa).

Glu-91 functions as the Proton acceptor in the catalytic mechanism. Positions 94 to 320 (LLPRDGLCVS…TKVRDSAGQD (227 aa)) constitute a Radical SAM core domain. The cysteines at positions 101 and 325 are disulfide-linked. Residues Cys-108, Cys-112, and Cys-115 each contribute to the [4Fe-4S] cluster site. S-adenosyl-L-methionine contacts are provided by residues 153–154 (GE), Ser-183, 206–208 (SLH), and Asn-282. The S-methylcysteine intermediate role is filled by Cys-325.

It belongs to the radical SAM superfamily. RlmN family. The cofactor is [4Fe-4S] cluster.

The protein localises to the cytoplasm. This chain is Probable RNA methyltransferase CV_2253, found in Chromobacterium violaceum (strain ATCC 12472 / DSM 30191 / JCM 1249 / CCUG 213 / NBRC 12614 / NCIMB 9131 / NCTC 9757 / MK).